The sequence spans 92 residues: Small ribosomal subunit protein uS19 (92 aa).

Belongs to the universal ribosomal protein uS19 family.

Its function is as follows. Protein S19 forms a complex with S13 that binds strongly to the 16S ribosomal RNA. The protein is Small ribosomal subunit protein uS19 of Borrelia hermsii (strain HS1 / DAH).